The following is a 393-amino-acid chain: Putative acid--amine ligase HI_0929 (393 aa).

103–105 (RFD) lines the ATP pocket. Mg(2+) contacts are provided by Asp-105, Glu-117, and Asn-119. ATP-binding positions include Lys-267, Lys-303, Gly-310, Gln-343, and 378–380 (AVT).

It belongs to the glutathionylspermidine synthase preATP-grasp family.

Functionally, may be a ligase forming an amide bond. Shows ATPase activity. The sequence is that of Putative acid--amine ligase HI_0929 from Haemophilus influenzae (strain ATCC 51907 / DSM 11121 / KW20 / Rd).